Here is a 462-residue protein sequence, read N- to C-terminus: Toxin CfTX-2 (462 aa).

The N-terminal stretch at 1–17 is a signal peptide; sequence MILVSLLPLLFMTGIAS.

The protein belongs to the jellyfish toxin family. Type I subfamily. As to quaternary structure, oligomer. Post-translationally, contains disulfide bonds. Nematocytes.

It is found in the secreted. The protein localises to the nematocyst. It localises to the target cell membrane. In terms of biological role, may cause profound effects on the cardiovascular system of anesthetized rats (at 25 ug/kg), since the fraction containing this toxin and CfTX-1 produces an initial increase in mean arterial pressure, followed by cardiovascular collapse in all animals within 1 minute of injection. To note, the same fraction does not induce significant change in heart rate. Has weak hemolytic activity. Is lethal to crayfish. Causes cutaneous inflammation in humans. May act as a pore-forming toxin, disrupting normal transmembrane ion concentration gradients in susceptible cells. This chain is Toxin CfTX-2, found in Chironex fleckeri (Australian box jellyfish).